Consider the following 221-residue polypeptide: Transcription antitermination protein NusB (221 aa).

This sequence belongs to the NusB family.

Involved in transcription antitermination. Required for transcription of ribosomal RNA (rRNA) genes. Binds specifically to the boxA antiterminator sequence of the ribosomal RNA (rrn) operons. The chain is Transcription antitermination protein NusB from Synechocystis sp. (strain ATCC 27184 / PCC 6803 / Kazusa).